The sequence spans 480 residues: Alkaline nuclease (480 aa).

It belongs to the herpesviridae alkaline nuclease family. As to quaternary structure, interacts with major DNA-binding protein; this interaction increases the nuclease processivity of the alkaline exonuclease.

It is found in the host nucleus. It localises to the host cytoplasm. In terms of biological role, plays a role in processing non linear or branched viral DNA intermediates in order to promote the production of mature packaged unit-length linear progeny viral DNA molecules. Exhibits endonuclease and exonuclease activities and accepts both double-stranded and single-stranded DNA as substrate. Exonuclease digestion of DNA is in the 5'-&gt; 3' direction and the products are 5'-monophosphate nucleosides. Additionally, forms a recombinase with the major DNA-binding protein, which displays strand exchange activity. The chain is Alkaline nuclease (U70) from Homo sapiens (Human).